Consider the following 199-residue polypeptide: NADH-quinone oxidoreductase subunit C (199 aa).

Belongs to the complex I 30 kDa subunit family. As to quaternary structure, NDH-1 is composed of 14 different subunits. Subunits NuoB, C, D, E, F, and G constitute the peripheral sector of the complex.

The protein localises to the cell inner membrane. It carries out the reaction a quinone + NADH + 5 H(+)(in) = a quinol + NAD(+) + 4 H(+)(out). In terms of biological role, NDH-1 shuttles electrons from NADH, via FMN and iron-sulfur (Fe-S) centers, to quinones in the respiratory chain. The immediate electron acceptor for the enzyme in this species is believed to be ubiquinone. Couples the redox reaction to proton translocation (for every two electrons transferred, four hydrogen ions are translocated across the cytoplasmic membrane), and thus conserves the redox energy in a proton gradient. This Cupriavidus pinatubonensis (strain JMP 134 / LMG 1197) (Cupriavidus necator (strain JMP 134)) protein is NADH-quinone oxidoreductase subunit C.